A 234-amino-acid chain; its full sequence is Orotidine 5'-phosphate decarboxylase (234 aa).

Substrate is bound by residues aspartate 10, lysine 31, 58-67 (DLKLHDIPNT), threonine 121, arginine 183, glutamine 192, glycine 212, and arginine 213. The Proton donor role is filled by lysine 60.

This sequence belongs to the OMP decarboxylase family. Type 1 subfamily. Homodimer.

It catalyses the reaction orotidine 5'-phosphate + H(+) = UMP + CO2. It functions in the pathway pyrimidine metabolism; UMP biosynthesis via de novo pathway; UMP from orotate: step 2/2. Its function is as follows. Catalyzes the decarboxylation of orotidine 5'-monophosphate (OMP) to uridine 5'-monophosphate (UMP). The protein is Orotidine 5'-phosphate decarboxylase of Lysinibacillus sphaericus (strain C3-41).